Consider the following 172-residue polypeptide: Translocon-associated protein subunit delta (172 aa).

A signal peptide spans 1–23 (MAAMASFGALALLLLSGLSCCSE). The Lumenal segment spans residues 24–143 (ACLEPQITPS…SVDHRGTWNG (120 aa)). A disulfide bond links Cys25 and Cys56. Residue Lys72 forms a Glycyl lysine isopeptide (Lys-Gly) (interchain with G-Cter in ubiquitin) linkage. Residues 144–164 (PWVSTEVLAAVIGIVIYYLAF) form a helical membrane-spanning segment. The Cytoplasmic segment spans residues 165 to 172 (SAKSHIQA).

The protein belongs to the TRAP-delta family. In terms of assembly, heterotetramer of TRAP-alpha, TRAP-beta, TRAP-delta and TRAP-gamma.

Its subcellular location is the endoplasmic reticulum membrane. TRAP proteins are part of a complex whose function is to bind calcium to the ER membrane and thereby regulate the retention of ER resident proteins. The protein is Translocon-associated protein subunit delta (Ssr4) of Mus musculus (Mouse).